The chain runs to 329 residues: Aspartate--ammonia ligase (329 aa).

Belongs to the class-II aminoacyl-tRNA synthetase family. AsnA subfamily.

The protein resides in the cytoplasm. The enzyme catalyses L-aspartate + NH4(+) + ATP = L-asparagine + AMP + diphosphate + H(+). Its pathway is amino-acid biosynthesis; L-asparagine biosynthesis; L-asparagine from L-aspartate (ammonia route): step 1/1. The chain is Aspartate--ammonia ligase from Ureaplasma urealyticum serovar 10 (strain ATCC 33699 / Western).